We begin with the raw amino-acid sequence, 81 residues long: Photosystem I iron-sulfur center (81 aa).

4Fe-4S ferredoxin-type domains are found at residues 2–31 (AHSV…MVPW) and 39–68 (IASA…VRVY). The [4Fe-4S] cluster site is built by cysteine 11, cysteine 14, cysteine 17, cysteine 21, cysteine 48, cysteine 51, cysteine 54, and cysteine 58.

The eukaryotic PSI reaction center is composed of at least 11 subunits. [4Fe-4S] cluster serves as cofactor.

The protein localises to the plastid. It localises to the chloroplast thylakoid membrane. It carries out the reaction reduced [plastocyanin] + hnu + oxidized [2Fe-2S]-[ferredoxin] = oxidized [plastocyanin] + reduced [2Fe-2S]-[ferredoxin]. Its function is as follows. Apoprotein for the two 4Fe-4S centers FA and FB of photosystem I (PSI); essential for photochemical activity. FB is the terminal electron acceptor of PSI, donating electrons to ferredoxin. The C-terminus interacts with PsaA/B/D and helps assemble the protein into the PSI complex. Required for binding of PsaD and PsaE to PSI. PSI is a plastocyanin/cytochrome c6-ferredoxin oxidoreductase, converting photonic excitation into a charge separation, which transfers an electron from the donor P700 chlorophyll pair to the spectroscopically characterized acceptors A0, A1, FX, FA and FB in turn. The protein is Photosystem I iron-sulfur center of Gracilaria tenuistipitata var. liui (Red alga).